Here is a 144-residue protein sequence, read N- to C-terminus: UPF0102 protein BMA2801 (144 aa).

Positions 1–28 (MCHAREASPGTGEPEAAPRDNFPRAAGS) are disordered.

It belongs to the UPF0102 family.

This Burkholderia mallei (strain ATCC 23344) protein is UPF0102 protein BMA2801.